Reading from the N-terminus, the 269-residue chain is Flagellar brake protein YcgR (269 aa).

The disordered stretch occupies residues 1 to 42 (MLREPMNQHDAPGPAETGADSDAETDAETDAETDAGAADDRY). Acidic residues predominate over residues 19 to 33 (ADSDAETDAETDAET). Positions 149–261 (QRRRHFRART…MENFLQRLVF (113 aa)) constitute a PilZ domain.

This sequence belongs to the YcgR family. In terms of assembly, monomer. Interacts with the flagellar basal bodies.

It localises to the bacterial flagellum basal body. Its function is as follows. Acts as a flagellar brake, regulating swimming and swarming in a bis-(3'-5') cyclic diguanylic acid (c-di-GMP)-dependent manner. Binds 1 c-di-GMP dimer per subunit. Increasing levels of c-di-GMP lead to decreased motility. The protein is Flagellar brake protein YcgR of Cupriavidus taiwanensis (strain DSM 17343 / BCRC 17206 / CCUG 44338 / CIP 107171 / LMG 19424 / R1) (Ralstonia taiwanensis (strain LMG 19424)).